The sequence spans 235 residues: Hydroxyacylglutathione hydrolase (235 aa).

7 residues coordinate Zn(2+): histidine 53, histidine 55, aspartate 57, histidine 58, histidine 109, aspartate 127, and histidine 165.

Belongs to the metallo-beta-lactamase superfamily. Glyoxalase II family. In terms of assembly, monomer. Zn(2+) serves as cofactor.

It carries out the reaction an S-(2-hydroxyacyl)glutathione + H2O = a 2-hydroxy carboxylate + glutathione + H(+). The protein operates within secondary metabolite metabolism; methylglyoxal degradation; (R)-lactate from methylglyoxal: step 2/2. Its function is as follows. Thiolesterase that catalyzes the hydrolysis of S-D-lactoyl-glutathione to form glutathione and D-lactic acid. The polypeptide is Hydroxyacylglutathione hydrolase (Haemophilus ducreyi (strain 35000HP / ATCC 700724)).